The following is a 70-amino-acid chain: Large ribosomal subunit protein bL31 (70 aa).

Lys8 bears the N6-acetyllysine mark. Positions 16, 18, 37, and 40 each coordinate Zn(2+).

The protein belongs to the bacterial ribosomal protein bL31 family. Type A subfamily. As to quaternary structure, part of the 50S ribosomal subunit. It depends on Zn(2+) as a cofactor.

In terms of biological role, binds the 23S rRNA. The polypeptide is Large ribosomal subunit protein bL31 (Shigella flexneri).